The sequence spans 99 residues: UPF0320 protein YER188C-A (99 aa).

Belongs to the UPF0320 family.

This chain is UPF0320 protein YER188C-A, found in Saccharomyces cerevisiae (strain ATCC 204508 / S288c) (Baker's yeast).